We begin with the raw amino-acid sequence, 82 residues long: MTFPRALTVIDDNGMVISIIFWFLLIIILILFSIALLNIIKLCMVCCNLGRTVIIVPARHAYDAYKNFMQIRAYNPDEALLV.

Residues 1–19 are Virion surface-facing; that stretch reads MTFPRALTVIDDNGMVISI. A helical transmembrane segment spans residues 20–40; it reads IFWFLLIIILILFSIALLNII. Topologically, residues 41–82 are intravirion; that stretch reads KLCMVCCNLGRTVIIVPARHAYDAYKNFMQIRAYNPDEALLV.

It belongs to the alphacoronaviruses E protein family. As to quaternary structure, homopentamer. Interacts with membrane protein M in the budding compartment of the host cell, which is located between endoplasmic reticulum and the Golgi complex. Interacts with Nucleoprotein.

It is found in the host Golgi apparatus membrane. In terms of biological role, plays a central role in virus morphogenesis and assembly. Acts as a viroporin and self-assembles in host membranes forming pentameric protein-lipid pores that allow ion transport. Also plays a role in the induction of apoptosis. This Canine coronavirus (strain Insavc-1) (CCoV) protein is Envelope small membrane protein.